The sequence spans 275 residues: Phenylalanine-4-hydroxylase (275 aa).

Fe cation-binding residues include histidine 135, histidine 140, and glutamate 181.

This sequence belongs to the biopterin-dependent aromatic amino acid hydroxylase family. Fe(2+) is required as a cofactor.

The enzyme catalyses (6R)-L-erythro-5,6,7,8-tetrahydrobiopterin + L-phenylalanine + O2 = (4aS,6R)-4a-hydroxy-L-erythro-5,6,7,8-tetrahydrobiopterin + L-tyrosine. It functions in the pathway amino-acid degradation; L-phenylalanine degradation; acetoacetate and fumarate from L-phenylalanine: step 1/6. The chain is Phenylalanine-4-hydroxylase (phhA) from Mesorhizobium japonicum (strain LMG 29417 / CECT 9101 / MAFF 303099) (Mesorhizobium loti (strain MAFF 303099)).